The primary structure comprises 1381 residues: Hepatocyte growth factor receptor (1381 aa).

An N-terminal signal peptide occupies residues 1-24; sequence MKAPAVLAPGILVLLFTLVQRSNG. Residues 25-934 are Extracellular-facing; the sequence is ECKEALTKSE…VQPDQNFTGL (910 aa). Residues 27–515 enclose the Sema domain; it reads KEALTKSEMN…TGKKITKIPL (489 aa). An N-linked (GlcNAc...) asparagine glycan is attached at N45. 4 cysteine pairs are disulfide-bonded: C95-C101, C98-C160, C133-C141, and C172-C175. N106 carries an N-linked (GlcNAc...) asparagine glycan. N149 is a glycosylation site (N-linked (GlcNAc...) asparagine). An N-linked (GlcNAc...) asparagine glycan is attached at N202. Intrachain disulfides connect C298–C363 and C385–C397. An N-linked (GlcNAc...) asparagine glycan is attached at N399. Intrachain disulfides connect C520–C538, C526–C561, C529–C545, and C541–C551. 3 IPT/TIG domains span residues 563–655, 657–739, and 742–836; these read PTIY…FSYV, PIIT…FSYR, and PIVY…LIYV. Residue T582 is glycosylated (O-linked (Man) threonine). N607 and N635 each carry an N-linked (GlcNAc...) asparagine glycan. T676 and T761 each carry an O-linked (Man) threonine glycan. 3 N-linked (GlcNAc...) asparagine glycosylation sites follow: N785, N879, and N930. The helical transmembrane segment at 935–955 threads the bilayer; sequence VAGVVSISIALLLLLGLFLWL. The Cytoplasmic segment spans residues 956 to 1381; the sequence is KKKKQIKDLG…QDNTDGEVDT (426 aa). S966 bears the Phosphoserine mark. T977 is modified (phosphothreonine). 3 positions are modified to phosphoserine: S990, S997, and S1000. Y1003 bears the Phosphotyrosine mark. One can recognise a Protein kinase domain in the interval 1078 to 1345; that stretch reads VHFNEVIGRG…RISAIFSTFI (268 aa). Residues 1084–1092 and K1110 contribute to the ATP site; that span reads IGRGHFGCV. The Proton acceptor role is filled by D1204. The interaction with RANBP9 stretch occupies residues 1212–1381; it reads LDEKFTVKVA…QDNTDGEVDT (170 aa). Phosphotyrosine is present on Y1230. Phosphotyrosine; by autocatalysis occurs at positions 1234 and 1235. T1289 carries the post-translational modification Phosphothreonine. An interaction with MUC20 region spans residues 1320-1359; that stretch reads WHPKAEMRPSFSELVSRISAIFSTFIGEHYVHVNATYVNV. Residues Y1349 and Y1356 each carry the phosphotyrosine; by autocatalysis modification. Residue Y1365 is modified to Phosphotyrosine.

This sequence belongs to the protein kinase superfamily. Tyr protein kinase family. As to quaternary structure, heterodimer made of an alpha chain (50 kDa) and a beta chain (145 kDa) which are disulfide linked. Binds PLXNB1. Interacts when phosphorylated with downstream effectors including STAT3, PIK3R1, SRC, PCLG1, GRB2 and GAB1. Interacts with SPSB1, SPSB2 and SPSB4. Interacts with INPP5D/SHIP1. When phosphorylated at Tyr-1356, interacts with INPPL1/SHIP2. Interacts with RANBP9 and RANBP10, as well as SPSB1, SPSB2, SPSB3 and SPSB4. SPSB1 binding occurs in the presence and in the absence of HGF, however HGF treatment has a positive effect on this interaction. Interacts with MUC20; prevents interaction with GRB2 and suppresses hepatocyte growth factor-induced cell proliferation. Interacts with GRB10. Interacts with PTPN1 and PTPN2. Interacts with HSP90AA1 and HSP90AB1; the interaction suppresses MET kinase activity. Interacts with tensin TNS3. Interacts (when phosphorylated) with tensin TNS4 (via SH2 domain); the interaction increases MET protein stability by inhibiting MET endocytosis and subsequent lysosomal degradation. Autophosphorylated in response to ligand binding on Tyr-1234 and Tyr-1235 in the kinase domain leading to further phosphorylation of Tyr-1349 and Tyr-1356 in the C-terminal multifunctional docking site. Dephosphorylated by PTPRJ at Tyr-1349 and Tyr-1365. Dephosphorylated by PTPN1 and PTPN2. Post-translationally, ubiquitinated. Ubiquitination by CBL regulates the receptor stability and activity through proteasomal degradation. In terms of processing, O-mannosylation of IPT/TIG domains by TMEM260 is required for protein maturation. O-mannosylated residues are composed of single mannose glycans that are not elongated or modified.

It is found in the membrane. It catalyses the reaction L-tyrosyl-[protein] + ATP = O-phospho-L-tyrosyl-[protein] + ADP + H(+). In terms of biological role, receptor tyrosine kinase that transduces signals from the extracellular matrix into the cytoplasm by binding to hepatocyte growth factor/HGF ligand. Regulates many physiological processes including proliferation, scattering, morphogenesis and survival. Ligand binding at the cell surface induces autophosphorylation of MET on its intracellular domain that provides docking sites for downstream signaling molecules. Following activation by ligand, interacts with the PI3-kinase subunit PIK3R1, PLCG1, SRC, GRB2, STAT3 or the adapter GAB1. Recruitment of these downstream effectors by MET leads to the activation of several signaling cascades including the RAS-ERK, PI3 kinase-AKT, or PLCgamma-PKC. The RAS-ERK activation is associated with the morphogenetic effects while PI3K/AKT coordinates prosurvival effects. During embryonic development, MET signaling plays a role in gastrulation, development and migration of muscles and neuronal precursors, angiogenesis and kidney formation. In adults, participates in wound healing as well as organ regeneration and tissue remodeling. Also promotes differentiation and proliferation of hematopoietic cells. The polypeptide is Hepatocyte growth factor receptor (MET) (Callithrix jacchus (White-tufted-ear marmoset)).